A 537-amino-acid polypeptide reads, in one-letter code: Glucose-6-phosphate isomerase (537 aa).

Residue Glu-355 is the Proton donor of the active site. Residues His-386 and Lys-501 contribute to the active site.

It belongs to the GPI family.

It localises to the cytoplasm. It carries out the reaction alpha-D-glucose 6-phosphate = beta-D-fructose 6-phosphate. It functions in the pathway carbohydrate biosynthesis; gluconeogenesis. It participates in carbohydrate degradation; glycolysis; D-glyceraldehyde 3-phosphate and glycerone phosphate from D-glucose: step 2/4. Functionally, catalyzes the reversible isomerization of glucose-6-phosphate to fructose-6-phosphate. This Protochlamydia amoebophila (strain UWE25) protein is Glucose-6-phosphate isomerase.